The following is a 219-amino-acid chain: 2-C-methyl-D-erythritol 4-phosphate cytidylyltransferase (219 aa).

Belongs to the IspD/TarI cytidylyltransferase family. IspD subfamily.

It catalyses the reaction 2-C-methyl-D-erythritol 4-phosphate + CTP + H(+) = 4-CDP-2-C-methyl-D-erythritol + diphosphate. It functions in the pathway isoprenoid biosynthesis; isopentenyl diphosphate biosynthesis via DXP pathway; isopentenyl diphosphate from 1-deoxy-D-xylulose 5-phosphate: step 2/6. In terms of biological role, catalyzes the formation of 4-diphosphocytidyl-2-C-methyl-D-erythritol from CTP and 2-C-methyl-D-erythritol 4-phosphate (MEP). In Endomicrobium trichonymphae, this protein is 2-C-methyl-D-erythritol 4-phosphate cytidylyltransferase.